Reading from the N-terminus, the 626-residue chain is Colicin-Ib (626 aa).

Over residues 276 to 286 the composition is skewed to polar residues; the sequence is QQLTQQKNTPD. A disordered region spans residues 276 to 308; that stretch reads QQLTQQKNTPDGKTIVSPEKFPGRSSTNHSIVV. A helical transmembrane segment spans residues 588–612; sequence FSVMLGTPVGILGFAIIMAAVSALV.

Belongs to the channel forming colicin family.

The protein localises to the host membrane. Functionally, this colicin is a channel-forming colicin. This class of transmembrane toxins depolarize the cytoplasmic membrane, leading to dissipation of cellular energy. In terms of biological role, colicins are polypeptide toxins produced by and active against E.coli and closely related bacteria. In Escherichia coli, this protein is Colicin-Ib (cib).